A 225-amino-acid chain; its full sequence is Methylthioribulose-1-phosphate dehydratase (225 aa).

Residues H106 and H108 each coordinate Zn(2+).

The protein belongs to the aldolase class II family. MtnB subfamily. Zn(2+) serves as cofactor.

It catalyses the reaction 5-(methylsulfanyl)-D-ribulose 1-phosphate = 5-methylsulfanyl-2,3-dioxopentyl phosphate + H2O. Its pathway is amino-acid biosynthesis; L-methionine biosynthesis via salvage pathway; L-methionine from S-methyl-5-thio-alpha-D-ribose 1-phosphate: step 2/6. Functionally, catalyzes the dehydration of methylthioribulose-1-phosphate (MTRu-1-P) into 2,3-diketo-5-methylthiopentyl-1-phosphate (DK-MTP-1-P). The chain is Methylthioribulose-1-phosphate dehydratase from Xanthomonas oryzae pv. oryzae (strain PXO99A).